The sequence spans 173 residues: NADH-ubiquinone oxidoreductase chain 6 (173 aa).

The next 4 membrane-spanning stretches (helical) occupy residues 12-32, 47-67, 94-114, and 142-162; these read VFWL…VSLV, GSFL…VIFA, VVLA…GECG, and GALM…LVLV.

The protein belongs to the complex I subunit 6 family.

It is found in the mitochondrion membrane. The catalysed reaction is a ubiquinone + NADH + 5 H(+)(in) = a ubiquinol + NAD(+) + 4 H(+)(out). Core subunit of the mitochondrial membrane respiratory chain NADH dehydrogenase (Complex I) that is believed to belong to the minimal assembly required for catalysis. Complex I functions in the transfer of electrons from NADH to the respiratory chain. The immediate electron acceptor for the enzyme is believed to be ubiquinone. The sequence is that of NADH-ubiquinone oxidoreductase chain 6 (MT-ND6) from Pelomedusa subrufa (African side-necked turtle).